A 165-amino-acid polypeptide reads, in one-letter code: Phosphopantetheine adenylyltransferase (165 aa).

Substrate is bound at residue threonine 9. ATP-binding positions include 9-10 and histidine 17; that span reads TF. Substrate-binding residues include lysine 41, leucine 73, and arginine 87. ATP-binding positions include 88–90, glutamate 98, and 123–129; these read GLR and YQFISGT.

This sequence belongs to the bacterial CoaD family. As to quaternary structure, homohexamer. Requires Mg(2+) as cofactor.

Its subcellular location is the cytoplasm. The catalysed reaction is (R)-4'-phosphopantetheine + ATP + H(+) = 3'-dephospho-CoA + diphosphate. The protein operates within cofactor biosynthesis; coenzyme A biosynthesis; CoA from (R)-pantothenate: step 4/5. Functionally, reversibly transfers an adenylyl group from ATP to 4'-phosphopantetheine, yielding dephospho-CoA (dPCoA) and pyrophosphate. This chain is Phosphopantetheine adenylyltransferase, found in Burkholderia orbicola (strain MC0-3).